A 261-amino-acid chain; its full sequence is F-actin-capping protein subunit alpha (261 aa).

Belongs to the F-actin-capping protein alpha subunit family. In terms of assembly, heterodimer of an alpha and a beta subunit.

In terms of biological role, F-actin-capping proteins bind in a Ca(2+)-independent manner to the fast growing ends of actin filaments (barbed end) thereby blocking the exchange of subunits at these ends. Unlike other capping proteins (such as gelsolin and severin), these proteins do not sever actin filaments. The protein is F-actin-capping protein subunit alpha (CAP1) of Eremothecium gossypii (strain ATCC 10895 / CBS 109.51 / FGSC 9923 / NRRL Y-1056) (Yeast).